Consider the following 240-residue polypeptide: 2,3,4,5-tetrahydropyridine-2,6-dicarboxylate N-acetyltransferase (240 aa).

It belongs to the transferase hexapeptide repeat family. DapH subfamily.

The enzyme catalyses (S)-2,3,4,5-tetrahydrodipicolinate + acetyl-CoA + H2O = L-2-acetamido-6-oxoheptanedioate + CoA. Its pathway is amino-acid biosynthesis; L-lysine biosynthesis via DAP pathway; LL-2,6-diaminopimelate from (S)-tetrahydrodipicolinate (acetylase route): step 1/3. In terms of biological role, catalyzes the transfer of an acetyl group from acetyl-CoA to tetrahydrodipicolinate. This is 2,3,4,5-tetrahydropyridine-2,6-dicarboxylate N-acetyltransferase from Shouchella clausii (strain KSM-K16) (Alkalihalobacillus clausii).